Reading from the N-terminus, the 319-residue chain is MIALRAPTPLIDRLPAVRGRLSADVALAPVTWFRVGGPAEAMFKPADAQDLADFLAGRPRDVAVRVIGVASNLLVRDGGVPGVVIRLGRAFTGVEVVGETLVCGASALDATVAKVAEAAGLAGLEFLSGIPGTLGGALRMNAGAHLREMADIVVLATAVDGLGQSHTLTPAQMGFSYRACALPEDWIFTGCVLAGRPDERGAIAARMEALRQAREASQPLRARTGGSTFANPDPDLSGGRRAWELIDAAGCRGLRLGGAQVSEKHCNFLINTGEATAADLEALGETVRRRVMDTSGVALRWEIKRIGIGLDGLSAGENG.

The region spanning 35-198 is the FAD-binding PCMH-type domain; that stretch reads VGGPAEAMFK…TGCVLAGRPD (164 aa). Residue R178 is part of the active site. The active-site Proton donor is the S227. The active site involves E302.

This sequence belongs to the MurB family. The cofactor is FAD.

The protein localises to the cytoplasm. It carries out the reaction UDP-N-acetyl-alpha-D-muramate + NADP(+) = UDP-N-acetyl-3-O-(1-carboxyvinyl)-alpha-D-glucosamine + NADPH + H(+). It functions in the pathway cell wall biogenesis; peptidoglycan biosynthesis. Functionally, cell wall formation. The chain is UDP-N-acetylenolpyruvoylglucosamine reductase from Rhodospirillum rubrum (strain ATCC 11170 / ATH 1.1.1 / DSM 467 / LMG 4362 / NCIMB 8255 / S1).